A 629-amino-acid chain; its full sequence is 1-deoxy-D-xylulose-5-phosphate synthase (629 aa).

Thiamine diphosphate contacts are provided by residues His-72 and 113 to 115; that span reads GHA. Asp-144 lines the Mg(2+) pocket. Residues 145 to 146, Asn-174, Tyr-287, and Glu-370 each bind thiamine diphosphate; that span reads GA. Asn-174 is a binding site for Mg(2+).

Belongs to the transketolase family. DXPS subfamily. As to quaternary structure, homodimer. It depends on Mg(2+) as a cofactor. Requires thiamine diphosphate as cofactor.

The enzyme catalyses D-glyceraldehyde 3-phosphate + pyruvate + H(+) = 1-deoxy-D-xylulose 5-phosphate + CO2. Its pathway is metabolic intermediate biosynthesis; 1-deoxy-D-xylulose 5-phosphate biosynthesis; 1-deoxy-D-xylulose 5-phosphate from D-glyceraldehyde 3-phosphate and pyruvate: step 1/1. Catalyzes the acyloin condensation reaction between C atoms 2 and 3 of pyruvate and glyceraldehyde 3-phosphate to yield 1-deoxy-D-xylulose-5-phosphate (DXP). This Prochlorococcus marinus (strain AS9601) protein is 1-deoxy-D-xylulose-5-phosphate synthase.